A 704-amino-acid polypeptide reads, in one-letter code: UvrABC system protein B (704 aa).

One can recognise a Helicase ATP-binding domain in the interval 35–188; that stretch reads ERINNGEKDV…DDLLRKFVSM (154 aa). 48–55 contacts ATP; that stretch reads GATGTGKS. Positions 101–124 match the Beta-hairpin motif; sequence YYDYYQPEAYVAQTDTFIEKDSSI. A Helicase C-terminal domain is found at 438-604; it reads QIDDLLGEIR…PLRKKIADIT (167 aa). Positions 659 to 694 constitute a UVR domain; it reads VGMIAQLTEQMHGAAAELQFEVAARIRDEVSELKKE.

This sequence belongs to the UvrB family. As to quaternary structure, forms a heterotetramer with UvrA during the search for lesions. Interacts with UvrC in an incision complex.

Its subcellular location is the cytoplasm. Functionally, the UvrABC repair system catalyzes the recognition and processing of DNA lesions. A damage recognition complex composed of 2 UvrA and 2 UvrB subunits scans DNA for abnormalities. Upon binding of the UvrA(2)B(2) complex to a putative damaged site, the DNA wraps around one UvrB monomer. DNA wrap is dependent on ATP binding by UvrB and probably causes local melting of the DNA helix, facilitating insertion of UvrB beta-hairpin between the DNA strands. Then UvrB probes one DNA strand for the presence of a lesion. If a lesion is found the UvrA subunits dissociate and the UvrB-DNA preincision complex is formed. This complex is subsequently bound by UvrC and the second UvrB is released. If no lesion is found, the DNA wraps around the other UvrB subunit that will check the other stand for damage. The sequence is that of UvrABC system protein B from Pseudarthrobacter chlorophenolicus (strain ATCC 700700 / DSM 12829 / CIP 107037 / JCM 12360 / KCTC 9906 / NCIMB 13794 / A6) (Arthrobacter chlorophenolicus).